The chain runs to 499 residues: Guanosine-5'-triphosphate,3'-diphosphate pyrophosphatase (499 aa).

Belongs to the GppA/Ppx family. GppA subfamily.

It catalyses the reaction guanosine 3'-diphosphate 5'-triphosphate + H2O = guanosine 3',5'-bis(diphosphate) + phosphate + H(+). Its pathway is purine metabolism; ppGpp biosynthesis; ppGpp from GTP: step 2/2. In terms of biological role, catalyzes the conversion of pppGpp to ppGpp. Guanosine pentaphosphate (pppGpp) is a cytoplasmic signaling molecule which together with ppGpp controls the 'stringent response', an adaptive process that allows bacteria to respond to amino acid starvation, resulting in the coordinated regulation of numerous cellular activities. This is Guanosine-5'-triphosphate,3'-diphosphate pyrophosphatase from Sodalis glossinidius (strain morsitans).